Reading from the N-terminus, the 297-residue chain is N-acetylneuraminate lyase (297 aa).

S47 and T48 together coordinate aceneuramate. Y137 functions as the Proton donor in the catalytic mechanism. The active-site Schiff-base intermediate with substrate is the K165. Aceneuramate contacts are provided by T167, G189, D191, E192, and S208.

Belongs to the DapA family. NanA subfamily. Homotetramer.

It is found in the cytoplasm. It catalyses the reaction aceneuramate = aldehydo-N-acetyl-D-mannosamine + pyruvate. The protein operates within amino-sugar metabolism; N-acetylneuraminate degradation; D-fructose 6-phosphate from N-acetylneuraminate: step 1/5. Catalyzes the reversible aldol cleavage of N-acetylneuraminic acid (sialic acid; Neu5Ac) to form pyruvate and N-acetylmannosamine (ManNAc) via a Schiff base intermediate. The protein is N-acetylneuraminate lyase of Escherichia fergusonii (strain ATCC 35469 / DSM 13698 / CCUG 18766 / IAM 14443 / JCM 21226 / LMG 7866 / NBRC 102419 / NCTC 12128 / CDC 0568-73).